We begin with the raw amino-acid sequence, 611 residues long: tRNA uridine 5-carboxymethylaminomethyl modification enzyme MnmG (611 aa).

12-17 (GGGHSG) provides a ligand contact to FAD. 271–285 (GPRYCPSIEEKVYRF) serves as a coordination point for NAD(+).

This sequence belongs to the MnmG family. As to quaternary structure, homodimer. Heterotetramer of two MnmE and two MnmG subunits. FAD serves as cofactor.

Its subcellular location is the cytoplasm. Functionally, NAD-binding protein involved in the addition of a carboxymethylaminomethyl (cmnm) group at the wobble position (U34) of certain tRNAs, forming tRNA-cmnm(5)s(2)U34. This is tRNA uridine 5-carboxymethylaminomethyl modification enzyme MnmG from Karelsulcia muelleri (strain GWSS) (Sulcia muelleri).